We begin with the raw amino-acid sequence, 248 residues long: ATP synthase subunit a (248 aa).

The propeptide at 1 to 3 (MLY) is removed in mature form. The next 7 membrane-spanning stretches (helical) occupy residues 24 to 44 (MSLTNSSLYFIIAAIISFFIF), 86 to 106 (IYMPLIFSLFIIILVSNLVGL), 117 to 137 (FALPLGLSVTIIISVTVIGFV), 146 to 166 (VLLPSGTPLGLVPLLLVVELL), 183 to 203 (ITSGHILLNIISGFLFKTSGI), 205 to 225 (LLFVIIPFTLFIALTGLELIV), and 227 to 247 (ILQAYVWSILTCIYIKDSLIL).

Belongs to the ATPase A chain family. As to quaternary structure, F-type ATPases have 2 components, CF(1) - the catalytic core - and CF(0) - the membrane proton channel. CF(1) has five subunits: alpha(3), beta(3), gamma(1), delta(1), epsilon(1). CF(0) has three main subunits: a, b and c.

The protein localises to the mitochondrion inner membrane. Mitochondrial membrane ATP synthase (F(1)F(0) ATP synthase or Complex V) produces ATP from ADP in the presence of a proton gradient across the membrane which is generated by electron transport complexes of the respiratory chain. F-type ATPases consist of two structural domains, F(1) - containing the extramembraneous catalytic core and F(0) - containing the membrane proton channel, linked together by a central stalk and a peripheral stalk. During catalysis, ATP synthesis in the catalytic domain of F(1) is coupled via a rotary mechanism of the central stalk subunits to proton translocation. Key component of the proton channel; it may play a direct role in the translocation of protons across the membrane. The polypeptide is ATP synthase subunit a (Zancudomyces culisetae (Gut fungus)).